We begin with the raw amino-acid sequence, 3103 residues long: Extracellular matrix protein 3 (3103 aa).

The signal sequence occupies residues 1 to 19 (MASALLCFLAAILPGMIAA). Topologically, residues 20–3047 (QNTWVLGTSD…TYELAPKGTN (3028 aa)) are extracellular. CSPG repeat units lie at residues 289-388 (PPSL…LEIV), 411-499 (APVV…FRMT), 520-630 (APIV…FRVV), 656-762 (PPEM…FVVQ), 784-875 (QPPT…LEIT), 901-993 (LPPG…LTLS), 1022-1124 (APNV…FRCT), 1145-1238 (EEPQ…VLLT), 1259-1357 (TPRL…FDIT), 1378-1470 (VHPS…FQVT), 1490-1579 (KEPV…FIVT), and 1613-1710 (APQI…VEVR). N-linked (GlcNAc...) asparagine glycosylation is found at asparagine 330 and asparagine 453. N-linked (GlcNAc...) asparagine glycans are attached at residues asparagine 989, asparagine 1024, asparagine 1042, asparagine 1207, asparagine 1294, asparagine 1321, and asparagine 1327. N-linked (GlcNAc...) asparagine glycans are attached at residues asparagine 1542, asparagine 1674, asparagine 1679, asparagine 1725, and asparagine 1739. Calx-beta domains follow at residues 1717–1816 (LPNQ…IILH), 1829–1942 (AVVT…VKLS), 1956–2062 (NVII…LVLN), and 2077–2179 (ITIN…LVLG). Residues asparagine 2080, asparagine 2195, asparagine 2274, asparagine 2385, and asparagine 2932 are each glycosylated (N-linked (GlcNAc...) asparagine). The 106-residue stretch at 2197–2302 (TVVTVHDVGD…MREAFTLHIT (106 aa)) folds into the Calx-beta 5 domain. The tract at residues 2983–3013 (SSGIGKRETEHHAISSRQRRQANSEALVDPA) is disordered. The chain crosses the membrane as a helical span at residues 3048–3068 (VVMIAVVIGVILIILLVALVI). At 3069–3103 (GVVVRRRQAKQQPVVVVNGSAKVVSNVHFDDNTEV) the chain is on the cytoplasmic side.

This sequence belongs to the FRAS1 family. Component of extracellular matrix fibers that interact with PMC filopodia during gastrulation (at protein level).

It localises to the cell membrane. Functionally, extracellular matrix protein that may serve as substrate for the migratory primary mesenchyme cells (PMCs), the interaction possibly providing guidance information to migrating PMCs. The polypeptide is Extracellular matrix protein 3 (ECM3) (Lytechinus variegatus (Green sea urchin)).